The following is a 483-amino-acid chain: Zinc metalloproteinase/disintegrin (483 aa).

A signal peptide spans 1–20; it reads MIQVLLVTLCLAAFPYQGSS. The propeptide occupies 21–190; that stretch reads IILESGNVND…KKASQLNLTP (170 aa). A Peptidase M12B domain is found at 198 to 394; that stretch reads RYIELVVVAD…HNPQCMLNEP (197 aa). Residues Glu-201 and Asp-285 each contribute to the Ca(2+) site. Disulfide bonds link Cys-309–Cys-389, Cys-349–Cys-373, and Cys-351–Cys-356. Residue His-334 coordinates Zn(2+). Residue Glu-335 is part of the active site. Positions 338 and 344 each coordinate Zn(2+). Ca(2+) is bound by residues Cys-389 and Asn-392. The propeptide occupies 395–418; sequence LRTDIVSTPVSGNELLETGEESDF. Residues 402–483 enclose the Disintegrin domain; it reads TPVSGNELLE…AGCPRNPFHA (82 aa). Intrachain disulfides connect Cys-425/Cys-448, Cys-439/Cys-445, Cys-444/Cys-469, and Cys-457/Cys-476. Positions 461–463 match the Cell attachment site motif; the sequence is RGD.

It belongs to the venom metalloproteinase (M12B) family. P-II subfamily. P-IId sub-subfamily. As to quaternary structure, homodimer; disulfide-linked (disintegrin). The cofactor is Zn(2+). In terms of tissue distribution, expressed by the venom gland.

Its subcellular location is the secreted. Functionally, impairs hemostasis in the envenomed animal. This protein has not been identified in the venom. Inhibits ADP-induced platelet aggregation. Binds and inhibits integrins GPIIb/GPIIIa (ITGA2B/ITGB3), alpha-5/beta-1 (ITGA5/ITGB1), alpha-V/beta-3 (ITGAV/ITGB3), and alpha-V/beta-5 (ITGAV/ITGB5). It blocks cancer cell adhesion (tested on human breast cancer cell line MDA-MB-435) to fibronectin and vitronectin and thus prevents invasion of cancer cells. This chain is Zinc metalloproteinase/disintegrin, found in Agkistrodon contortrix contortrix (Southern copperhead).